The primary structure comprises 157 residues: Peptide methionine sulfoxide reductase MsrA (157 aa).

Cysteine 13 is an active-site residue.

The protein belongs to the MsrA Met sulfoxide reductase family.

It catalyses the reaction L-methionyl-[protein] + [thioredoxin]-disulfide + H2O = L-methionyl-(S)-S-oxide-[protein] + [thioredoxin]-dithiol. The enzyme catalyses [thioredoxin]-disulfide + L-methionine + H2O = L-methionine (S)-S-oxide + [thioredoxin]-dithiol. Functionally, has an important function as a repair enzyme for proteins that have been inactivated by oxidation. Catalyzes the reversible oxidation-reduction of methionine sulfoxide in proteins to methionine. The polypeptide is Peptide methionine sulfoxide reductase MsrA (Methanococcus maripaludis (strain C5 / ATCC BAA-1333)).